Here is a 330-residue protein sequence, read N- to C-terminus: Aspartate--ammonia ligase (330 aa).

Belongs to the class-II aminoacyl-tRNA synthetase family. AsnA subfamily.

The protein resides in the cytoplasm. The enzyme catalyses L-aspartate + NH4(+) + ATP = L-asparagine + AMP + diphosphate + H(+). Its pathway is amino-acid biosynthesis; L-asparagine biosynthesis; L-asparagine from L-aspartate (ammonia route): step 1/1. The protein is Aspartate--ammonia ligase of Escherichia coli O8 (strain IAI1).